A 147-amino-acid chain; its full sequence is MSVLPPTLRENRRYVLFRIITLVNPTQKEVYRSMADSVSALFGDAGAAKMHPAVVWSEGEYAIARCTRGYEQSLIAALAVVTKVCGEPASFRSLATSGTILSLKKKVIPESIDDTTYPGYLCAGKKVNNLSKENGHRYLTRDDIIKE.

It belongs to the eukaryotic/archaeal RNase P protein component 2 family. Consists of a catalytic RNA component and at least 4-5 protein subunits.

It is found in the cytoplasm. It carries out the reaction Endonucleolytic cleavage of RNA, removing 5'-extranucleotides from tRNA precursor.. In terms of biological role, part of ribonuclease P, a protein complex that generates mature tRNA molecules by cleaving their 5'-ends. The sequence is that of Ribonuclease P protein component 2 from Methanocorpusculum labreanum (strain ATCC 43576 / DSM 4855 / Z).